The primary structure comprises 509 residues: Cobyric acid synthase (509 aa).

Positions 262-459 (EIKVGIIKLP…IHGIFENDSW (198 aa)) constitute a GATase cobBQ-type domain. C343 acts as the Nucleophile in catalysis. H451 is an active-site residue.

Belongs to the CobB/CobQ family. CobQ subfamily.

It functions in the pathway cofactor biosynthesis; adenosylcobalamin biosynthesis. Functionally, catalyzes amidations at positions B, D, E, and G on adenosylcobyrinic A,C-diamide. NH(2) groups are provided by glutamine, and one molecule of ATP is hydrogenolyzed for each amidation. The polypeptide is Cobyric acid synthase (Prochlorococcus marinus (strain MIT 9301)).